The sequence spans 157 residues: MARRKRVYRKIERRDPRYDSALVGKLISKVMLDGKRSLAERIVYAAIDMANEGTDSIDPLEVITRAIENAKPRVEVKSRRVGGATYQVPLEVDPARSESLAMRWIVNYARNRKGVPMHKALANEIKEAANNQGSSVRKRDDVHKMAQANRAFAHFRW.

Belongs to the universal ribosomal protein uS7 family. As to quaternary structure, part of the 30S ribosomal subunit. Contacts proteins S9 and S11.

Its function is as follows. One of the primary rRNA binding proteins, it binds directly to 16S rRNA where it nucleates assembly of the head domain of the 30S subunit. Is located at the subunit interface close to the decoding center, probably blocks exit of the E-site tRNA. This is Small ribosomal subunit protein uS7 from Akkermansia muciniphila (strain ATCC BAA-835 / DSM 22959 / JCM 33894 / BCRC 81048 / CCUG 64013 / CIP 107961 / Muc).